The chain runs to 393 residues: Glucose-1-phosphate adenylyltransferase (393 aa).

Residues tyrosine 105, glycine 170, glutamate 185–lysine 186, and serine 196 each bind alpha-D-glucose 1-phosphate.

It belongs to the bacterial/plant glucose-1-phosphate adenylyltransferase family. As to quaternary structure, homotetramer.

It catalyses the reaction alpha-D-glucose 1-phosphate + ATP + H(+) = ADP-alpha-D-glucose + diphosphate. It functions in the pathway glycan biosynthesis; glycogen biosynthesis. Its function is as follows. Involved in the biosynthesis of ADP-glucose, a building block required for the elongation reactions to produce glycogen. Catalyzes the reaction between ATP and alpha-D-glucose 1-phosphate (G1P) to produce pyrophosphate and ADP-Glc. The polypeptide is Glucose-1-phosphate adenylyltransferase (Clostridium perfringens (strain 13 / Type A)).